The sequence spans 180 residues: Adenine phosphoribosyltransferase (180 aa).

It belongs to the purine/pyrimidine phosphoribosyltransferase family. Homodimer.

Its subcellular location is the cytoplasm. It carries out the reaction AMP + diphosphate = 5-phospho-alpha-D-ribose 1-diphosphate + adenine. It functions in the pathway purine metabolism; AMP biosynthesis via salvage pathway; AMP from adenine: step 1/1. Its function is as follows. Catalyzes a salvage reaction resulting in the formation of AMP, that is energically less costly than de novo synthesis. The sequence is that of Adenine phosphoribosyltransferase from Mycobacterium avium (strain 104).